The chain runs to 304 residues: KIN17-like protein (304 aa).

A C2H2-type zinc finger spans residues 26-50 (WYCSACQKQMRDENGFKCHTQSEGH). Disordered stretches follow at residues 204-228 (IDLS…SAQN) and 261-291 (LNKS…DIIA).

The protein belongs to the KIN17 family.

Its subcellular location is the nucleus. It is found in the nucleolus. The sequence is that of KIN17-like protein from Schizosaccharomyces pombe (strain 972 / ATCC 24843) (Fission yeast).